A 1187-amino-acid chain; its full sequence is DNA excision repair protein CSB (1187 aa).

A compositionally biased stretch (polar residues) spans 31 to 43; it reads QATTDPADSSGPT. 4 disordered regions span residues 31–53, 75–102, 217–242, and 265–351; these read QATT…PDDA, IKGA…HHGA, KRVE…MEAS, and DSES…EGSD. Composition is skewed to basic and acidic residues over residues 92 to 101 and 217 to 230; these read KGKDQPDHHG and KRVE…RQDD. Over residues 300–319 the composition is skewed to basic residues; it reads KRPRNKTKRPLPGKKWRKAN. Residues 339–351 show a composition bias toward acidic residues; that stretch reads SDDDEDQVTEGSD. The Helicase ATP-binding domain maps to 384-580; that stretch reads WELHCQRAGG…WSLFDFVFPG (197 aa). Residue 397-404 coordinates ATP; the sequence is DEMGLGKT. Residues 457-480 are disordered; sequence SSSKKSKRSSDSDSEASWDSDQEE. Residues 468–480 are compositionally biased toward acidic residues; it reads SDSEASWDSDQEE. Positions 531–534 match the DEGH box motif; it reads DEGH. The region spanning 716–876 is the Helicase C-terminal domain; that stretch reads KVVEQVLKVW…RRFFKARDMK (161 aa). 2 disordered regions span residues 916 to 945 and 1095 to 1116; these read LYAA…HCPD and GSAS…SSTR. Low complexity predominate over residues 918-933; sequence AASATPTTSGTEPSSS.

It belongs to the SNF2/RAD54 helicase family. As to quaternary structure, homodimer. Binds DNA. In terms of tissue distribution, expressed in proliferating tissues. Highly expressed in shoot apical meristem (SAM). Expressed in roots, young leaves, flag leaves, and panicles. Expressed at very low levels in mature leaves.

The protein resides in the nucleus. Functionally, essential factor involved in transcription-coupled nucleotide excision repair (TCR) which allows RNA polymerase II-blocking lesions to be rapidly removed from the transcribed strand of active genes. Upon DNA-binding, it locally modifies DNA conformation by wrapping the DNA around itself, thereby modifying the interface between stalled RNA polymerase II and DNA. It is required for transcription-coupled repair complex formation. In Oryza sativa subsp. japonica (Rice), this protein is DNA excision repair protein CSB.